The sequence spans 622 residues: tRNA uridine 5-carboxymethylaminomethyl modification enzyme MnmG (622 aa).

FAD is bound at residue Gly-10–Gly-15. Gly-269–Phe-283 contributes to the NAD(+) binding site.

Belongs to the MnmG family. Homodimer. Heterotetramer of two MnmE and two MnmG subunits. It depends on FAD as a cofactor.

Its subcellular location is the cytoplasm. NAD-binding protein involved in the addition of a carboxymethylaminomethyl (cmnm) group at the wobble position (U34) of certain tRNAs, forming tRNA-cmnm(5)s(2)U34. The sequence is that of tRNA uridine 5-carboxymethylaminomethyl modification enzyme MnmG from Bartonella quintana (strain Toulouse) (Rochalimaea quintana).